The primary structure comprises 238 residues: Formate dehydrogenase, cytochrome b556 subunit (238 aa).

The heme b site is built by His23 and His62. The next 4 helical transmembrane spans lie at 23 to 43 (HWMLVICFFMTMFTGVAFFFP), 60 to 80 (AIHPFTGILMFFAFIYLALLY), 120 to 140 (MLFWTLNLAMVTLLVTGIIMW), and 155 to 175 (IAILLHSASAFMLFTGILVHI). Positions 160 and 174 each coordinate heme b.

The protein belongs to the formate dehydrogenase gamma subunit family. As to quaternary structure, formate dehydrogenase is a membrane-bound complex, formed by subunits alpha, beta and gamma. Heme is required as a cofactor.

Its subcellular location is the cell membrane. In terms of biological role, allows to use formate as major electron donor during anaerobic respiration. Subunit gamma is probably the cytochrome b556(FDO) component of the formate dehydrogenase. This Haemophilus influenzae (strain ATCC 51907 / DSM 11121 / KW20 / Rd) protein is Formate dehydrogenase, cytochrome b556 subunit (fdxI).